We begin with the raw amino-acid sequence, 238 residues long: IkB-like protein (238 aa).

4 ANK repeats span residues 48–77 (GSSV…PGEI), 86–115 (DGNS…KNGT), 123–152 (NGMT…DPTQ), and 157–187 (RGFT…PLYM). A Nuclear localization signal motif is present at residues 80–86 (PHRRDKD). Positions 202–213 (KKKPKIIITGCK) match the Nuclear localization signal motif. The short motif at 205 to 212 (PKIIITGC) is the PxIxITxC motif; Interaction with host PPP3CA element. The FLCV motif signature appears at 227 to 230 (FLCV).

Belongs to the asfivirus A238L family. Interacts with host PPIA. Interacts with host PPP3CA/Calcineurin. Interacts with host RELA/p65; interaction of the 32 kDa form with host RELA results in the formation of a stable complex with NF-kappa-B. Interacts with host PPP3R1. Interacts with host EP300; this interaction inhibits the association of host EP300 with host RELA, JUN and NFATC2. Post-translationally, the protein exists in a 28 kDa and a 32 kDa form, probably due to post-translational modifications which are neither phosphorylation, nor sumoylation.

Its subcellular location is the host nucleus. The protein resides in the host cytoplasm. Its function is as follows. I-kappa-B- (IkB)-like protein that inhibits the binding of NF-kappa-B to DNA, thereby down-regulating pro-inflammatory cytokine production. Forms a heterodimer with the NF-kappa-B subunit RELA/p65 and prevents the activation of the NF-kappa-B transcription factor. Also inhibits the host calcineurin phosphatase activity, which is required for the induction of nuclear factor of activated T cells(NFAT)-dependent immune response genes. Inhibits calcineurin function, which is required for the induction of nuclear factor of activated T cells (NFAT)-dependent immune response genes. Prevents the binding of substrates to calcineurin without affecting the phosphatase activity. Does not contain the serine residues that are phosphorylated by host IkB kinase and thus is not degraded following stimulation of the NFkB pathway. The sequence is that of IkB-like protein (A238L) from African swine fever virus (strain Badajoz 1971 Vero-adapted) (Ba71V).